The chain runs to 395 residues: F-box/kelch-repeat protein SKIP25 (395 aa).

The disordered stretch occupies residues 1–29 (MEKKLKRRESMSTTAAESPPAKRRRTVTG). Positions 34–79 (ALIEGLPDHISEICLSLVHRPSLLSAVCTRWRRLLYSPEFPSFPSL) constitute an F-box domain. Kelch repeat units lie at residues 81-129 (ALFV…YRHP), 147-194 (LILI…ACDG), 196-245 (IYIA…FSRE), 246-299 (AIDA…AMEE), and 301-342 (ILYS…TQVT).

In terms of assembly, part of a SCF (ASK-cullin-F-box) protein ligase complex. Interacts with SKP1A/ASK1.

It localises to the nucleus. The protein operates within protein modification; protein ubiquitination. Component of SCF(ASK-cullin-F-box) E3 ubiquitin ligase complexes, which may mediate the ubiquitination and subsequent proteasomal degradation of target proteins. The chain is F-box/kelch-repeat protein SKIP25 (SKIP25) from Arabidopsis thaliana (Mouse-ear cress).